The primary structure comprises 134 residues: MSFIREFKEFVMRGNVIDLAVAVVIGAAFGKIVTALVDKIISPLIGVMVGGIDFSKLSLTLKAATVDAAGKEVPAVVIGYGDFLNTILQFIIIAFAIFIIVKMINKVINKQPLPPETPSEDVLLLREIRDSLKK.

2 helical membrane passes run Val-16–Leu-36 and Gly-81–Val-101.

This sequence belongs to the MscL family. In terms of assembly, homopentamer.

The protein resides in the cell inner membrane. Its function is as follows. Channel that opens in response to stretch forces in the membrane lipid bilayer. May participate in the regulation of osmotic pressure changes within the cell. The polypeptide is Large-conductance mechanosensitive channel (Xylella fastidiosa (strain 9a5c)).